The chain runs to 21 residues: Cytoplasmic filament protein A (21 aa).

A disordered region spans residues 1–21 (AILELPQSPNVFHPEKPSAVG).

The protein resides in the cytoplasm. Its function is as follows. Component of the cytoplasmic filaments that run the length of the organism just underneath the cytoplasmic membrane. This is Cytoplasmic filament protein A (cfpA) from Treponema phagedenis.